The following is a 94-amino-acid chain: Cell division protein FtsB (94 aa).

Over 1 to 3 (MRA) the chain is Cytoplasmic. The chain crosses the membrane as a helical span at residues 4-21 (FAVLLIIALGWLQYTLWF). The Periplasmic portion of the chain corresponds to 22 to 94 (GKNGMEDYAQ…YRIIDENSEE (73 aa)). A coiled-coil region spans residues 40-60 (EEVNQGLRNRNGQMFAEIDDL).

It belongs to the FtsB family. In terms of assembly, part of a complex composed of FtsB, FtsL and FtsQ.

The protein resides in the cell inner membrane. In terms of biological role, essential cell division protein. May link together the upstream cell division proteins, which are predominantly cytoplasmic, with the downstream cell division proteins, which are predominantly periplasmic. The protein is Cell division protein FtsB of Aliivibrio salmonicida (strain LFI1238) (Vibrio salmonicida (strain LFI1238)).